A 495-amino-acid polypeptide reads, in one-letter code: Methyl viologen resistance protein SmvA (495 aa).

14 helical membrane passes run tryptophan 5–leucine 25, leucine 44–leucine 64, leucine 73–threonine 93, tryptophan 96–leucine 116, valine 135–leucine 155, phenylalanine 158–threonine 178, proline 192–alanine 212, leucine 220–isoleucine 240, isoleucine 260–leucine 280, valine 299–valine 319, valine 327–phenylalanine 347, leucine 357–methionine 377, isoleucine 391–leucine 411, and valine 469–leucine 489.

It belongs to the major facilitator superfamily. TCR/Tet family.

Its subcellular location is the cell inner membrane. In terms of biological role, major efflux pump for acriflavine and other quaternary ammonium compounds (QACs). Also required for resistance to methyl viologen. The chain is Methyl viologen resistance protein SmvA (smvA) from Salmonella typhimurium (strain LT2 / SGSC1412 / ATCC 700720).